Reading from the N-terminus, the 1114-residue chain is Extracellular sulfatase SULF-1 homolog (1114 aa).

The signal sequence occupies residues 1-25 (MMRHSSLRLIIGGLILLLFVLNVFS). Residues aspartate 62, aspartate 63, and cysteine 98 each coordinate Ca(2+). The active-site Nucleophile is cysteine 98. Cysteine 98 carries the post-translational modification 3-oxoalanine (Cys). Residues asparagine 122, asparagine 159, asparagine 181, asparagine 208, and asparagine 251 are each glycosylated (N-linked (GlcNAc...) asparagine). Residues aspartate 327 and histidine 328 each coordinate Ca(2+). Residue asparagine 447 is glycosylated (N-linked (GlcNAc...) asparagine). Over residues 466 to 479 (SSSSTAATLMSSTA) the composition is skewed to low complexity. The interval 466-504 (SSSSTAATLMSSTAQQPEDGEEEVETDNEEDDVDGDGAM) is disordered. Over residues 483-502 (EDGEEEVETDNEEDDVDGDG) the composition is skewed to acidic residues. N-linked (GlcNAc...) asparagine glycans are attached at residues asparagine 683, asparagine 713, and asparagine 743. The tract at residues 781–812 (KQLRESNKQALAAGRRNDNRRRNDQSVLDSGA) is disordered. Basic and acidic residues predominate over residues 795 to 804 (RRNDNRRRND). Residue asparagine 817 is glycosylated (N-linked (GlcNAc...) asparagine). The segment covering 876–895 (ADSKEMAREARRKLKEERQR) has biased composition (basic and acidic residues). Positions 876–901 (ADSKEMAREARRKLKEERQRKKERKR) are disordered. Residues asparagine 945, asparagine 955, and asparagine 974 are each glycosylated (N-linked (GlcNAc...) asparagine). A disordered region spans residues 1073–1114 (LSKYNRLTGSQQSHMKRRPWKQTPLQQSPRFLRTHSVTPAQA). The span at 1095 to 1114 (TPLQQSPRFLRTHSVTPAQA) shows a compositional bias: polar residues.

It belongs to the sulfatase family. It depends on Ca(2+) as a cofactor. Post-translationally, the conversion to 3-oxoalanine (also known as C-formylglycine, FGly), of a serine or cysteine residue in prokaryotes and of a cysteine residue in eukaryotes, is critical for catalytic activity.

The protein resides in the endoplasmic reticulum. Its subcellular location is the golgi apparatus. It is found in the golgi stack. The protein localises to the cell surface. This Drosophila melanogaster (Fruit fly) protein is Extracellular sulfatase SULF-1 homolog (Sulf1).